A 448-amino-acid polypeptide reads, in one-letter code: Probable glycine dehydrogenase (decarboxylating) subunit 1 (448 aa).

Belongs to the GcvP family. N-terminal subunit subfamily. As to quaternary structure, the glycine cleavage system is composed of four proteins: P, T, L and H. In this organism, the P 'protein' is a heterodimer of two subunits.

It carries out the reaction N(6)-[(R)-lipoyl]-L-lysyl-[glycine-cleavage complex H protein] + glycine + H(+) = N(6)-[(R)-S(8)-aminomethyldihydrolipoyl]-L-lysyl-[glycine-cleavage complex H protein] + CO2. In terms of biological role, the glycine cleavage system catalyzes the degradation of glycine. The P protein binds the alpha-amino group of glycine through its pyridoxal phosphate cofactor; CO(2) is released and the remaining methylamine moiety is then transferred to the lipoamide cofactor of the H protein. The polypeptide is Probable glycine dehydrogenase (decarboxylating) subunit 1 (Bacillus velezensis (strain DSM 23117 / BGSC 10A6 / LMG 26770 / FZB42) (Bacillus amyloliquefaciens subsp. plantarum)).